Consider the following 411-residue polypeptide: Serine hydroxymethyltransferase (411 aa).

(6S)-5,6,7,8-tetrahydrofolate-binding positions include leucine 119 and 123 to 125 (GHL). Lysine 228 is subject to N6-(pyridoxal phosphate)lysine. Residue 351-353 (SPF) participates in (6S)-5,6,7,8-tetrahydrofolate binding.

The protein belongs to the SHMT family. As to quaternary structure, homodimer. Pyridoxal 5'-phosphate serves as cofactor.

Its subcellular location is the cytoplasm. It catalyses the reaction (6R)-5,10-methylene-5,6,7,8-tetrahydrofolate + glycine + H2O = (6S)-5,6,7,8-tetrahydrofolate + L-serine. It functions in the pathway one-carbon metabolism; tetrahydrofolate interconversion. Its pathway is amino-acid biosynthesis; glycine biosynthesis; glycine from L-serine: step 1/1. Functionally, catalyzes the reversible interconversion of serine and glycine with tetrahydrofolate (THF) serving as the one-carbon carrier. This reaction serves as the major source of one-carbon groups required for the biosynthesis of purines, thymidylate, methionine, and other important biomolecules. Also exhibits THF-independent aldolase activity toward beta-hydroxyamino acids, producing glycine and aldehydes, via a retro-aldol mechanism. This Clostridium botulinum (strain Eklund 17B / Type B) protein is Serine hydroxymethyltransferase.